The sequence spans 314 residues: Serine/threonine-protein phosphatase PP2A-4 catalytic subunit (314 aa).

4 residues coordinate Mn(2+): Asp-62, His-64, Asp-90, and Asn-122. His-123 (proton donor) is an active-site residue. Mn(2+) contacts are provided by His-172 and His-246.

This sequence belongs to the PPP phosphatase family. PP-2A subfamily. Mn(2+) is required as a cofactor.

It localises to the cytoplasm. The catalysed reaction is O-phospho-L-seryl-[protein] + H2O = L-seryl-[protein] + phosphate. It catalyses the reaction O-phospho-L-threonyl-[protein] + H2O = L-threonyl-[protein] + phosphate. This is Serine/threonine-protein phosphatase PP2A-4 catalytic subunit (PP2A4) from Oryza sativa subsp. japonica (Rice).